Here is a 118-residue protein sequence, read N- to C-terminus: Nucleoid-associated protein TM_0687 (118 aa).

Belongs to the YbaB/EbfC family. Homodimer.

It localises to the cytoplasm. It is found in the nucleoid. Binds to DNA and alters its conformation. May be involved in regulation of gene expression, nucleoid organization and DNA protection. The polypeptide is Nucleoid-associated protein TM_0687 (Thermotoga maritima (strain ATCC 43589 / DSM 3109 / JCM 10099 / NBRC 100826 / MSB8)).